A 130-amino-acid chain; its full sequence is Fluoride-specific ion channel FluC (130 aa).

The next 4 helical transmembrane spans lie at 3–23, 38–58, 67–87, and 102–122; these read FVFLWAALGGAIGSSLRYFVG, LGTFSVNLIGCFVIGFMGHLA, FGIFFVTGVLGGFTTFSSYGL, and VSYVLGTNLLGLIGVAIGWFL. Na(+) contacts are provided by Gly77 and Thr80.

This sequence belongs to the fluoride channel Fluc/FEX (TC 1.A.43) family.

Its subcellular location is the cell inner membrane. The enzyme catalyses fluoride(in) = fluoride(out). With respect to regulation, na(+) is not transported, but it plays an essential structural role and its presence is essential for fluoride channel function. In terms of biological role, fluoride-specific ion channel. Important for reducing fluoride concentration in the cell, thus reducing its toxicity. This chain is Fluoride-specific ion channel FluC, found in Helicobacter pylori (strain HPAG1).